Reading from the N-terminus, the 220-residue chain is Small ribosomal subunit protein uS2 (220 aa).

Residues 201–220 form a disordered region; the sequence is LPPDGDLPEPPSEFEVKFKR.

Belongs to the universal ribosomal protein uS2 family.

The sequence is that of Small ribosomal subunit protein uS2 from Staphylothermus marinus (strain ATCC 43588 / DSM 3639 / JCM 9404 / F1).